A 149-amino-acid polypeptide reads, in one-letter code: UPF0178 protein Mmwyl1_2258 (149 aa).

It belongs to the UPF0178 family.

The protein is UPF0178 protein Mmwyl1_2258 of Marinomonas sp. (strain MWYL1).